Here is a 916-residue protein sequence, read N- to C-terminus: MLTNIAKKIFGSRNDRLLKQYRKSVARINALEEQMQALSDADLQAKTAEFKQRLADGQTLDGILPEAFAVCREASRRVLGMRHFDVQLIGGMVLHDGKIAEMRTGEGKTLVATLAVYLNALAGKGVHVVTVNDYLASRDAGIMEPLYNFLGLTVGVIISDMQPFDRQNAYAADITYGTNNEFGFDYLRDNMVTDQYDKVQRELNFAVVDEVDSILIDEARTPLIISGQADDNIQLYQIMNTVPPHLVRQETEEGEGDYWVDEKAHQVILSETGHEHAEQILTQMGLLAENDSLYSAANISLMHHLMAALRAHSLFHKDQHYVIQDGEIVIVDEFTGRLMSGRRWSEGLHQAVEAKEGVEIKRENQTLASITFQNYFRLYTKLSGMTGTADTEAFEFQSIYNLETVIIPTNRPVQRKDFNDQIFRSAEEKFEAVVKDIEECHKRGQPVLVGTTSIENSELVSRLLQKAGLPHNVLNAKEHEREALIVAQAGKVGAITVATNMAGRGTDIVLGGNLKHQTDAIRADETLSDEEKQAQIAALENGWQAEHDKVMEAGGLHIIGTERHESRRIDNQLRGRSGRQGDPGSSRFYLSFEDPLLRLFALDRAAAILNRLAPERGVAIEHNLLTRQIEGAQRKVEGRNFDMRKQVLEYDDVANEQRKVIYSQRNEILTSKDIGDLMQEIRSDAVSDLVDTYMPPDSMEEQWDIPTLENRLAAEFRLQEDIQSWLKADNAIDGQDIKERLIERIENEYAAKTELVGKQAMADFERNVMLQAIDNQWREHLAAMDYLRQGIHLRSYAQKNPKQEYKREAFTMFQDLWNGIKFHIASLLTSVQIEQNPVAAVEEQPVGNIQSIHSESPDIEELLGQSQTDLVTEAFNPDGTDFSPEALEARGQIVHRNDPCPCGSGLKYKQCHGKLA.

Residues Gln87, 105-109 (GEGKT), and Asp507 each bind ATP. Zn(2+) contacts are provided by Cys900, Cys902, Cys911, and His912.

The protein belongs to the SecA family. As to quaternary structure, monomer and homodimer. Part of the essential Sec protein translocation apparatus which comprises SecA, SecYEG and auxiliary proteins SecDF-YajC and YidC. Zn(2+) is required as a cofactor.

The protein resides in the cell inner membrane. It localises to the cytoplasm. It carries out the reaction ATP + H2O + cellular proteinSide 1 = ADP + phosphate + cellular proteinSide 2.. Functionally, part of the Sec protein translocase complex. Interacts with the SecYEG preprotein conducting channel. Has a central role in coupling the hydrolysis of ATP to the transfer of proteins into and across the cell membrane, serving both as a receptor for the preprotein-SecB complex and as an ATP-driven molecular motor driving the stepwise translocation of polypeptide chains across the membrane. In Neisseria gonorrhoeae (strain NCCP11945), this protein is Protein translocase subunit SecA.